A 262-amino-acid chain; its full sequence is DNA repair protein RecO (262 aa).

It belongs to the RecO family.

Its function is as follows. Involved in DNA repair and RecF pathway recombination. This Acidovorax ebreus (strain TPSY) (Diaphorobacter sp. (strain TPSY)) protein is DNA repair protein RecO.